A 154-amino-acid chain; its full sequence is 6,7-dimethyl-8-ribityllumazine synthase (154 aa).

5-amino-6-(D-ribitylamino)uracil is bound by residues F24, S56 to E58, and A80 to V82. E85–T86 is a (2S)-2-hydroxy-3-oxobutyl phosphate binding site. H88 serves as the catalytic Proton donor. F113 serves as a coordination point for 5-amino-6-(D-ribitylamino)uracil. A (2S)-2-hydroxy-3-oxobutyl phosphate-binding site is contributed by R127.

The protein belongs to the DMRL synthase family.

The catalysed reaction is (2S)-2-hydroxy-3-oxobutyl phosphate + 5-amino-6-(D-ribitylamino)uracil = 6,7-dimethyl-8-(1-D-ribityl)lumazine + phosphate + 2 H2O + H(+). Its pathway is cofactor biosynthesis; riboflavin biosynthesis; riboflavin from 2-hydroxy-3-oxobutyl phosphate and 5-amino-6-(D-ribitylamino)uracil: step 1/2. Its function is as follows. Catalyzes the formation of 6,7-dimethyl-8-ribityllumazine by condensation of 5-amino-6-(D-ribitylamino)uracil with 3,4-dihydroxy-2-butanone 4-phosphate. This is the penultimate step in the biosynthesis of riboflavin. This chain is 6,7-dimethyl-8-ribityllumazine synthase, found in Thermococcus gammatolerans (strain DSM 15229 / JCM 11827 / EJ3).